We begin with the raw amino-acid sequence, 512 residues long: MSNQNAVETKTDVVLVGAGIMSATLGALLRQLQPDWSISTFERLDAVAAESSDPWNNAGTGHSALCELNYTPENSDGTVDIKKAVNVNEQFQVSRQFWAHAVEQGVLTQPKEFINPIPHVSFVHGEANAKYLRARYDALAGHTLFRGMEYIDDPAEFSERLPLMAKGRDFSDPIALNWSQDGTDVDFGALTKQLIGYIGKTGGKMYFGHEVTNLTQNSDKSWTVKVTNRRTGEKRTVRSRFVFVGAGGGALHLLQKSGIKEAKGFGGFPVSGAFLRCTNPELIDQHSAKVYGKAAVGAPPMSVPHLDTRVIGNKPGLLFGPYAGWSPKFLKQGRVTDLPGSVKPNNILSMLGVGVSELGLVKYLVSELAKNEAGRIWDLREFAPKAQAQDWELITAGQRVQVIRRAKGKGGVLEFGTAVVAAEDGSIAGLLGASPGASTAVPAMLDVLERCFPTEFQGWKGKLREMVPSIGVKLTDNEGLFNQVWDWSSKVLELDSAGASESAPVADTVATV.

This sequence belongs to the MQO family. It depends on FAD as a cofactor.

It carries out the reaction (S)-malate + a quinone = a quinol + oxaloacetate. Its pathway is carbohydrate metabolism; tricarboxylic acid cycle; oxaloacetate from (S)-malate (quinone route): step 1/1. This is Probable malate:quinone oxidoreductase from Rhodococcus erythropolis (strain PR4 / NBRC 100887).